Here is a 364-residue protein sequence, read N- to C-terminus: Chorismate synthase (364 aa).

Residues Arg-47 and Arg-53 each coordinate NADP(+). Residues 124-126 (RSS), Gly-286, 301-305 (KPTAT), and Arg-327 each bind FMN.

This sequence belongs to the chorismate synthase family. As to quaternary structure, homotetramer. FMNH2 serves as cofactor.

It catalyses the reaction 5-O-(1-carboxyvinyl)-3-phosphoshikimate = chorismate + phosphate. Its pathway is metabolic intermediate biosynthesis; chorismate biosynthesis; chorismate from D-erythrose 4-phosphate and phosphoenolpyruvate: step 7/7. Functionally, catalyzes the anti-1,4-elimination of the C-3 phosphate and the C-6 proR hydrogen from 5-enolpyruvylshikimate-3-phosphate (EPSP) to yield chorismate, which is the branch point compound that serves as the starting substrate for the three terminal pathways of aromatic amino acid biosynthesis. This reaction introduces a second double bond into the aromatic ring system. In Acaryochloris marina (strain MBIC 11017), this protein is Chorismate synthase.